A 258-amino-acid polypeptide reads, in one-letter code: Imidazole glycerol phosphate synthase subunit HisF (258 aa).

Residues aspartate 11 and aspartate 130 contribute to the active site.

This sequence belongs to the HisA/HisF family. As to quaternary structure, heterodimer of HisH and HisF.

The protein localises to the cytoplasm. The catalysed reaction is 5-[(5-phospho-1-deoxy-D-ribulos-1-ylimino)methylamino]-1-(5-phospho-beta-D-ribosyl)imidazole-4-carboxamide + L-glutamine = D-erythro-1-(imidazol-4-yl)glycerol 3-phosphate + 5-amino-1-(5-phospho-beta-D-ribosyl)imidazole-4-carboxamide + L-glutamate + H(+). Its pathway is amino-acid biosynthesis; L-histidine biosynthesis; L-histidine from 5-phospho-alpha-D-ribose 1-diphosphate: step 5/9. IGPS catalyzes the conversion of PRFAR and glutamine to IGP, AICAR and glutamate. The HisF subunit catalyzes the cyclization activity that produces IGP and AICAR from PRFAR using the ammonia provided by the HisH subunit. The chain is Imidazole glycerol phosphate synthase subunit HisF from Pectobacterium carotovorum subsp. carotovorum (strain PC1).